A 1380-amino-acid polypeptide reads, in one-letter code: DNA-directed RNA polymerase subunit beta (1380 aa).

Belongs to the RNA polymerase beta chain family. In terms of assembly, the RNAP catalytic core consists of 2 alpha, 1 beta, 1 beta' and 1 omega subunit. When a sigma factor is associated with the core the holoenzyme is formed, which can initiate transcription.

It carries out the reaction RNA(n) + a ribonucleoside 5'-triphosphate = RNA(n+1) + diphosphate. In terms of biological role, DNA-dependent RNA polymerase catalyzes the transcription of DNA into RNA using the four ribonucleoside triphosphates as substrates. In Sinorhizobium fredii (strain NBRC 101917 / NGR234), this protein is DNA-directed RNA polymerase subunit beta.